A 229-amino-acid polypeptide reads, in one-letter code: Cytidylate kinase (229 aa).

12-20 (GPSGTGKSS) is a binding site for ATP.

This sequence belongs to the cytidylate kinase family. Type 1 subfamily.

The protein resides in the cytoplasm. The catalysed reaction is CMP + ATP = CDP + ADP. The enzyme catalyses dCMP + ATP = dCDP + ADP. The sequence is that of Cytidylate kinase from Rhodococcus opacus (strain B4).